Here is a 199-residue protein sequence, read N- to C-terminus: dITP/XTP pyrophosphatase (199 aa).

Substrate is bound at residue 8–13 (SGNAGK). Residue aspartate 69 is the Proton acceptor of the active site. Residue aspartate 69 coordinates Mg(2+). Substrate is bound by residues serine 70, 154–157 (FGYN), lysine 177, and 182–183 (HR).

Belongs to the HAM1 NTPase family. As to quaternary structure, homodimer. The cofactor is Mg(2+).

The enzyme catalyses XTP + H2O = XMP + diphosphate + H(+). It catalyses the reaction dITP + H2O = dIMP + diphosphate + H(+). The catalysed reaction is ITP + H2O = IMP + diphosphate + H(+). Functionally, pyrophosphatase that catalyzes the hydrolysis of nucleoside triphosphates to their monophosphate derivatives, with a high preference for the non-canonical purine nucleotides XTP (xanthosine triphosphate), dITP (deoxyinosine triphosphate) and ITP. Seems to function as a house-cleaning enzyme that removes non-canonical purine nucleotides from the nucleotide pool, thus preventing their incorporation into DNA/RNA and avoiding chromosomal lesions. This Xanthomonas campestris pv. campestris (strain 8004) protein is dITP/XTP pyrophosphatase.